Here is a 641-residue protein sequence, read N- to C-terminus: Chaperone protein DnaK (641 aa).

Threonine 199 carries the phosphothreonine; by autocatalysis modification. A disordered region spans residues 602–641; it reads MYADQADQAQQAGGQEEGQAKSADDAVDAEFEEVKDDDKK. The segment covering 604–615 has biased composition (low complexity); the sequence is ADQADQAQQAGG. Over residues 626 to 641 the composition is skewed to acidic residues; that stretch reads DAVDAEFEEVKDDDKK.

This sequence belongs to the heat shock protein 70 family.

In terms of biological role, acts as a chaperone. The protein is Chaperone protein DnaK of Marinobacter nauticus (strain ATCC 700491 / DSM 11845 / VT8) (Marinobacter aquaeolei).